The sequence spans 477 residues: E3 ubiquitin-protein ligase TRIM17 (477 aa).

The RING-type zinc-finger motif lies at C16–R66. The B box-type zinc-finger motif lies at Q94–A135. Positions 99, 102, 121, and 127 each coordinate Zn(2+). Residues A135 to A223 adopt a coiled-coil conformation. Residues P277–V475 enclose the B30.2/SPRY domain.

Belongs to the TRIM/RBCC family. Interacts (via coiled coil) with TRIM44 (via coiled coil). Interacts with TRIM28; this interaction prevents TRIM28 activity on BCL2A1. Interacts with TRIM41; this interaction prevents TRIM41 activity on ZSCAN2. Interacts with BECN1. Interacts with NFATC3 and NFATC4; these interactions prevent NFATC3 and NFATC4 nuclear localization. Auto-ubiquitinated. As to expression, almost exclusively in the testis.

Its subcellular location is the cytoplasm. The protein resides in the lysosome. The catalysed reaction is S-ubiquitinyl-[E2 ubiquitin-conjugating enzyme]-L-cysteine + [acceptor protein]-L-lysine = [E2 ubiquitin-conjugating enzyme]-L-cysteine + N(6)-ubiquitinyl-[acceptor protein]-L-lysine.. The protein operates within protein modification; protein ubiquitination. In terms of biological role, E3 ubiquitin ligase that plays important roles in the regulation of neuronal apoptosis, selective autophagy or cell proliferation. Stimulates the degradation of kinetochore ZW10 interacting protein ZWINT in a proteasome-dependent manner, leading to negative regulation of cell proliferation. Inhibits autophagic degradation of diverse known targets while contributing to autophagy of midbodies. Autophagy-inhibitory activity involves MCL1, which TRIM17 assembles into complexes with the key autophagy regulator BECN1. Controls neuronal apoptosis by mediating ubiquitination and degradation of MCL1 to initiate neuronal death. In addition, regulates NFAT transcription factors NFATC3 and NFATC4 activities by preventing their nuclear localization, thus inhibiting their transcriptional activities. Decreases TRIM41-mediated degradation of ZSCAN2 thereby stimulating alpha-synuclein/SNCA transcription in neuronal cells. Prevents the E3 ubiquitin-ligase activity of TRIM28 and its interaction with anti-apoptotic BCL2A1, blocking TRIM28 from ubiquitinating BCL2A1. In Homo sapiens (Human), this protein is E3 ubiquitin-protein ligase TRIM17 (TRIM17).